Reading from the N-terminus, the 105-residue chain is Pyrimidine/purine nucleoside phosphorylase (105 aa).

This sequence belongs to the nucleoside phosphorylase PpnP family.

The catalysed reaction is a purine D-ribonucleoside + phosphate = a purine nucleobase + alpha-D-ribose 1-phosphate. It catalyses the reaction adenosine + phosphate = alpha-D-ribose 1-phosphate + adenine. It carries out the reaction cytidine + phosphate = cytosine + alpha-D-ribose 1-phosphate. The enzyme catalyses guanosine + phosphate = alpha-D-ribose 1-phosphate + guanine. The catalysed reaction is inosine + phosphate = alpha-D-ribose 1-phosphate + hypoxanthine. It catalyses the reaction thymidine + phosphate = 2-deoxy-alpha-D-ribose 1-phosphate + thymine. It carries out the reaction uridine + phosphate = alpha-D-ribose 1-phosphate + uracil. The enzyme catalyses xanthosine + phosphate = alpha-D-ribose 1-phosphate + xanthine. Its function is as follows. Catalyzes the phosphorolysis of diverse nucleosides, yielding D-ribose 1-phosphate and the respective free bases. Can use uridine, adenosine, guanosine, cytidine, thymidine, inosine and xanthosine as substrates. Also catalyzes the reverse reactions. The protein is Pyrimidine/purine nucleoside phosphorylase of Wolinella succinogenes (strain ATCC 29543 / DSM 1740 / CCUG 13145 / JCM 31913 / LMG 7466 / NCTC 11488 / FDC 602W) (Vibrio succinogenes).